We begin with the raw amino-acid sequence, 153 residues long: Urease accessory protein UreE (153 aa).

It belongs to the UreE family.

Its subcellular location is the cytoplasm. In terms of biological role, involved in urease metallocenter assembly. Binds nickel. Probably functions as a nickel donor during metallocenter assembly. This Acetivibrio thermocellus (strain ATCC 27405 / DSM 1237 / JCM 9322 / NBRC 103400 / NCIMB 10682 / NRRL B-4536 / VPI 7372) (Clostridium thermocellum) protein is Urease accessory protein UreE.